The primary structure comprises 169 residues: Transmembrane protein B169L (169 aa).

The next 2 membrane-spanning stretches (helical) occupy residues 28 to 48 and 60 to 80; these read NPFI…FAIC and TAIY…YVLN. Residue N88 is glycosylated (N-linked (GlcNAc...) asparagine; by host). A disordered region spans residues 107–169; the sequence is DEIIPPISPP…EVIMPSQYNN (63 aa). Over residues 140–154 the composition is skewed to low complexity; it reads KPADSKPASSADSKP.

The protein belongs to the asfivirus B169L family.

It localises to the host membrane. The protein resides in the virion. In Ornithodoros (relapsing fever ticks), this protein is Transmembrane protein B169L.